A 662-amino-acid polypeptide reads, in one-letter code: Probable actin-related protein 8 (662 aa).

2 stretches are compositionally biased toward basic and acidic residues: residues 50-59 (AGEKDAKETE) and 67-77 (TKQDDSKKSQV). Residues 50 to 92 (AGEKDAKETESESANGDTKQDDSKKSQVEEEEDGIEESELGEE) form a disordered region. Positions 78–89 (EEEEDGIEESEL) are enriched in acidic residues. 339–342 (DMGA) lines the ATP pocket.

The protein belongs to the actin family. Component of the chromatin remodeling Ino80 complex. Exists as monomers and dimers, but the dimer is most probably the biologically relevant form required for stable interactions with histones that exploits the twofold symmetry of the nucleosome core.

Its subcellular location is the nucleus. In terms of biological role, probably involved in transcription regulation via its interaction with the INO80 complex, a chromatin remodeling complex. Exhibits low basal ATPase activity, and unable to polymerize. Strongly prefer nucleosomes and H3-H4 tetramers over H2A-H2B dimers, suggesting it may act as a nucleosome recognition module within the complex. In Schizosaccharomyces pombe (strain 972 / ATCC 24843) (Fission yeast), this protein is Probable actin-related protein 8.